Here is a 67-residue protein sequence, read N- to C-terminus: MPKLKTKSGAKKRFVPKKSGKVKFRRAGVRHLATFGKTKKQKRHLRGTDHLAPMDEKKIKECFPYAR.

The interval 1-20 (MPKLKTKSGAKKRFVPKKSG) is disordered.

The protein belongs to the bacterial ribosomal protein bL35 family.

The chain is Large ribosomal subunit protein bL35 from Anaeromyxobacter dehalogenans (strain 2CP-C).